A 288-amino-acid chain; its full sequence is 4-diphosphocytidyl-2-C-methyl-D-erythritol kinase (288 aa).

K8 is an active-site residue. 92–102 (PVAAGMAGGST) contributes to the ATP binding site. The active site involves D134.

It belongs to the GHMP kinase family. IspE subfamily.

It carries out the reaction 4-CDP-2-C-methyl-D-erythritol + ATP = 4-CDP-2-C-methyl-D-erythritol 2-phosphate + ADP + H(+). Its pathway is isoprenoid biosynthesis; isopentenyl diphosphate biosynthesis via DXP pathway; isopentenyl diphosphate from 1-deoxy-D-xylulose 5-phosphate: step 3/6. In terms of biological role, catalyzes the phosphorylation of the position 2 hydroxy group of 4-diphosphocytidyl-2C-methyl-D-erythritol. This is 4-diphosphocytidyl-2-C-methyl-D-erythritol kinase from Clostridium perfringens (strain 13 / Type A).